Here is a 404-residue protein sequence, read N- to C-terminus: Glucose-1-phosphate adenylyltransferase (404 aa).

Alpha-D-glucose 1-phosphate is bound by residues Tyr-99, Gly-164, 179-180 (EK), and Ser-197.

It belongs to the bacterial/plant glucose-1-phosphate adenylyltransferase family.

It carries out the reaction alpha-D-glucose 1-phosphate + ATP + H(+) = ADP-alpha-D-glucose + diphosphate. It functions in the pathway capsule biogenesis; capsule polysaccharide biosynthesis. Its pathway is glycan biosynthesis; glycogen biosynthesis. Involved in the biosynthesis of ADP-glucose, a building block, required in the biosynthesis of maltose-1-phosphate (M1P) and in the elongation reactions to produce linear alpha-1,4-glucans. Catalyzes the reaction between ATP and alpha-D-glucose 1-phosphate (G1P) to produce pyrophosphate and ADP-Glc. This is Glucose-1-phosphate adenylyltransferase from Mycobacterium ulcerans (strain Agy99).